We begin with the raw amino-acid sequence, 135 residues long: FK506-binding protein 2 (135 aa).

Positions 1–20 (MRVPIITTLLTLALTGLSQA) are cleaved as a signal peptide. Positions 40 to 128 (GDTVKMHYRG…IFQTELLEIE (89 aa)) constitute a PPIase FKBP-type domain. A Prevents secretion from ER motif is present at residues 132 to 135 (KDEL).

The protein belongs to the FKBP-type PPIase family. FKBP2 subfamily.

It is found in the endoplasmic reticulum. The catalysed reaction is [protein]-peptidylproline (omega=180) = [protein]-peptidylproline (omega=0). Inhibited by both FK506 and rapamycin. PPIases accelerate the folding of proteins. It catalyzes the cis-trans isomerization of proline imidic peptide bonds in oligopeptides. In Emericella nidulans (strain FGSC A4 / ATCC 38163 / CBS 112.46 / NRRL 194 / M139) (Aspergillus nidulans), this protein is FK506-binding protein 2 (fkbB).